Reading from the N-terminus, the 455-residue chain is Peroxisomal membrane protein PEX3 (455 aa).

The span at 113-125 (TVLSDDFSTSQEG) shows a compositional bias: polar residues. The disordered stretch occupies residues 113–135 (TVLSDDFSTSQEGAISEDTNKPP). A helical membrane pass occupies residues 155–171 (FLTLIYCESLLIVFLHL).

Belongs to the peroxin-3 family. In terms of assembly, component of the peroxisomal docking complex, composed of at least PEX3, PEX13, PEX14 and PEX17. Component of the peroxisomal translocation complex, composed of at least PEX3, PEX2, PEX10 and PEX12. Interacts with PEX19. Interacts with the pexophagy receptor ATG30.

It localises to the peroxisome membrane. Its function is as follows. Peroxisomal membrane protein required for peroxisome biosynthesis. Shared component of both the peroxisomal docking complex and the peroxisomal translocation complex. The two types of peroxisomal matrix targeting signals, PTS1 and PTS2, are first recognized in the cytosol by their receptors PEX5 and PEX7, respectively, which then carry the cargo to the peroxisomal membrane. The peroxisomal targeting signal (PTS) receptor-cargo complexes interact with peroxisomal membrane protein (PMP) components of the docking complex. They have then additional downstream interactions with the translocation complex, leading to the transport of fully folded and oligomerized cargo into the peroxisome matrix. PEX3 acts as an anchoring site for PEX19 on the peroxisomal membrane and thus plays a crucial role in the assembly of the peroxisomal translocation complex. Is also essential for the interaction between the two complexes. Finally. PEX3 activates selective autophagy of peroxisomes (pexophagy) via interaction with the pexophagy receptor ATG30. The sequence is that of Peroxisomal membrane protein PEX3 from Komagataella pastoris (Yeast).